A 64-amino-acid chain; its full sequence is Putative neurotoxin-H (64 aa).

An N-terminal signal peptide occupies residues 1–19 (MYATVTVTVLLLISSGIFC). Disulfide bonds link C25-C45, C32-C54, and C36-C56.

Expressed by the venom gland.

The protein resides in the secreted. This chain is Putative neurotoxin-H, found in Lychas mucronatus (Chinese swimming scorpion).